Reading from the N-terminus, the 238-residue chain is Cysteine-rich venom protein (238 aa).

An N-terminal signal peptide occupies residues 1–19 (MIAFIVLLSLAAVLQQSSG). Residues 20–27 (TVDFASES) constitute a propeptide that is removed on maturation. In terms of domain architecture, SCP spans 39–164 (KKHNALRRSV…PTKYLYVCQY (126 aa)). 8 disulfides stabilise this stretch: Cys75/Cys153, Cys92/Cys165, Cys148/Cys162, Cys184/Cys191, Cys187/Cys196, Cys200/Cys233, Cys209/Cys227, and Cys218/Cys231. Residues 200 to 233 (CKREDDYSNCKSLAEKNKCMEEWMKSKCPASCFC) form the ShKT domain.

This sequence belongs to the CRISP family. As to expression, expressed by the venom gland.

Its subcellular location is the secreted. Its function is as follows. Blocks olfactory (CNGA2) and retinal (CNGA1) cyclic nucleotide-gated (CNG) ion channel currents. Does not inhibit retinal (CNGA3) currents. It forms high-affinity contacts with the pore turret region and most likely inhibits CNG channel current by blocking the external entrance to the transmembrane pore. Does not affect neither depolarization- nor caffeine-induced contraction arterial smooth muscle. This Demansia vestigiata (Lesser black whip snake) protein is Cysteine-rich venom protein.